A 306-amino-acid polypeptide reads, in one-letter code: Large ribosomal subunit protein mL45 (306 aa).

This sequence belongs to the mitochondrion-specific ribosomal protein mL45 family. As to quaternary structure, component of the mitochondrial ribosome large subunit (39S) which comprises a 16S rRNA and about 50 distinct proteins.

It localises to the mitochondrion. Its function is as follows. Component of the mitochondrial large ribosomal subunit (mt-LSU). Within the mitochondrial ribosomes, required to direct the nascent polypeptide toward the tunnel exit and position the exit at a distance from the membrane surface. The polypeptide is Large ribosomal subunit protein mL45 (MRPL45) (Bos taurus (Bovine)).